A 389-amino-acid polypeptide reads, in one-letter code: GTPase Obg (389 aa).

One can recognise an Obg domain in the interval 1–159 (MKFVDEAVIR…RSLKLELLLL (159 aa)). In terms of domain architecture, OBG-type G spans 160 to 333 (ADVGLLGMPN…LALKLLDYIA (174 aa)). GTP is bound by residues 166–173 (GMPNAGKS), 191–195 (FTTLV), 213–216 (DIPG), 283–286 (NKTD), and 314–316 (SAY). Residues S173 and T193 each coordinate Mg(2+).

Belongs to the TRAFAC class OBG-HflX-like GTPase superfamily. OBG GTPase family. As to quaternary structure, monomer. It depends on Mg(2+) as a cofactor.

The protein resides in the cytoplasm. Functionally, an essential GTPase which binds GTP, GDP and possibly (p)ppGpp with moderate affinity, with high nucleotide exchange rates and a fairly low GTP hydrolysis rate. Plays a role in control of the cell cycle, stress response, ribosome biogenesis and in those bacteria that undergo differentiation, in morphogenesis control. This Shewanella baltica (strain OS223) protein is GTPase Obg.